Here is a 1281-residue protein sequence, read N- to C-terminus: Protein ETHYLENE-INSENSITIVE 2 (1281 aa).

At 1–21 (MDGQQLRSSESPASGGGGVTG) the chain is on the cytoplasmic side. Residues 22–42 (GGAPHLFHALGPALLISIGYI) traverse the membrane as a helical segment. The Extracellular portion of the chain corresponds to 43-61 (DLGKWVAAVEAGSRFGLDL). A helical transmembrane segment spans residues 62–82 (VLLALLFNFMAILCQYLAACI). The Cytoplasmic segment spans residues 83–112 (GTVTGRSLAEICHQEYSRPTCIFLGVQAGL). Residues 113 to 133 (SLLTSELTMIFGIALGFNLLF) traverse the membrane as a helical segment. The Extracellular portion of the chain corresponds to 134-137 (EYDD). A helical membrane pass occupies residues 138–158 (LITGICFATVVPNLLPYAISH). Residues 159–163 (LGKKM) are Cytoplasmic-facing. A helical membrane pass occupies residues 164–184 (VGTLNACIAGFALLCYVLGLL). Over 185–208 (VSQPQIPLTTNVIFPKLSGESAYS) the chain is Extracellular. A helical membrane pass occupies residues 209-229 (LMALLGANVMAHNFYIHSSVV). Residues 230–238 (QGQKRSAFA) lie on the Cytoplasmic side of the membrane. Residues 239–259 (VGALFHDHLFSVLFIFTGIFL) form a helical membrane-spanning segment. Over 260–297 (VNHVLMNSAAADSTNTLLLTFQDVVELMNQIFVNPMAP) the chain is Extracellular. Residues 298 to 318 (TIFLVVLLFSSHIISLTSAIG) traverse the membrane as a helical segment. The Cytoplasmic segment spans residues 319–325 (SQVISQH). A helical transmembrane segment spans residues 326–346 (LFGINLPLSGHHLILKAFAIV). Residues 347–362 (PALYCAKVAGAEGIYQ) are Extracellular-facing. A helical transmembrane segment spans residues 363–383 (LLIICQIIQAMLLPSSVVPLF). At 384–400 (RVASSRLIMGAHRVSLH) the chain is on the cytoplasmic side. Residues 401–421 (LEILTFLAFLLMLFSNIIFMA) traverse the membrane as a helical segment. The Extracellular portion of the chain corresponds to 422–447 (EMLFGDSGWLNTLKGNTGSPVVFPST). A helical membrane pass occupies residues 448-468 (VLITVACVSVAFSLYMAVTPL). Residues 469–1281 (KSGSHEAELQ…KRRLSSKGQQ (813 aa)) lie on the Cytoplasmic side of the membrane. 2 disordered regions span residues 540–565 (IESD…SPSF) and 593–665 (ESTV…NGSG). The span at 548 to 557 (HSTAHTSTAP) shows a compositional bias: polar residues. Residues 599-610 (VDSKSTGERDIE) are compositionally biased toward basic and acidic residues.

Belongs to the NRAMP (TC 2.A.55) family. As to expression, expressed in roots, leaf sheaths, leaf blades, flowers, developing seeds, germinating seeds and young seedlings. Expressed in adventitious roots, vascular tissues of the seminal roots, lateral roots, the connecting region between vascular tissues and lateral roots, mature leaf, mature stem, tips of adventitious roots derived from the node, shoot apex, young panicle, anthers, pistil, stigma, ovary, seed coat and fruit coat pericarp.

The protein localises to the membrane. Central factor in ethylene signaling pathways that control development, senescence and grain size. Acts as a positive component of the ethylene-signaling pathway. The protein is Protein ETHYLENE-INSENSITIVE 2 of Oryza sativa subsp. japonica (Rice).